Reading from the N-terminus, the 118-residue chain is Beta-elicitin cryptogein (118 aa).

Residues 1–20 form the signal peptide; the sequence is MNFTALLAAVAAALVGSANA. Cystine bridges form between cysteine 23–cysteine 91, cysteine 47–cysteine 76, and cysteine 71–cysteine 115.

Belongs to the elicitin family.

It is found in the secreted. Its function is as follows. Induces local and distal defense responses (incompatible hypersensitive reaction) in plants from the solanaceae and cruciferae families. Elicits leaf necrosis and causes the accumulation of pathogenesis-related proteins. Might interact with the lipidic molecules of the plasma membrane. The protein is Beta-elicitin cryptogein of Phytophthora cryptogea.